The following is a 64-amino-acid chain: Large ribosomal subunit protein bL35 (64 aa).

It belongs to the bacterial ribosomal protein bL35 family.

This Chlorobium chlorochromatii (strain CaD3) protein is Large ribosomal subunit protein bL35.